Reading from the N-terminus, the 218-residue chain is GTP cyclohydrolase 1 (218 aa).

Zn(2+) is bound by residues Cys-107, His-110, and Cys-178.

This sequence belongs to the GTP cyclohydrolase I family. In terms of assembly, homomer.

The enzyme catalyses GTP + H2O = 7,8-dihydroneopterin 3'-triphosphate + formate + H(+). The protein operates within cofactor biosynthesis; 7,8-dihydroneopterin triphosphate biosynthesis; 7,8-dihydroneopterin triphosphate from GTP: step 1/1. The protein is GTP cyclohydrolase 1 of Azorhizobium caulinodans (strain ATCC 43989 / DSM 5975 / JCM 20966 / LMG 6465 / NBRC 14845 / NCIMB 13405 / ORS 571).